The chain runs to 268 residues: TATA-box-binding protein (268 aa).

The segment covering Met-1 to Ser-24 has biased composition (polar residues). The tract at residues Met-1 to Ala-86 is disordered. The span at Asn-50–Ala-86 shows a compositional bias: low complexity. A run of 2 repeats spans residues Leu-95 to Ile-171 and Ile-185 to Leu-262.

Belongs to the TBP family. In terms of assembly, belongs to the TFIID complex together with the TBP-associated factors (TAFs). Binds DNA as monomer.

The protein localises to the nucleus. Functionally, general transcription factor that functions at the core of the DNA-binding multiprotein factor TFIID. Binding of TFIID to the TATA box is the initial transcriptional step of the pre-initiation complex (PIC), playing a role in the activation of eukaryotic genes transcribed by RNA polymerase II. In Emericella nidulans (strain FGSC A4 / ATCC 38163 / CBS 112.46 / NRRL 194 / M139) (Aspergillus nidulans), this protein is TATA-box-binding protein (tbpA).